We begin with the raw amino-acid sequence, 554 residues long: NADH-quinone oxidoreductase subunit N 3 (554 aa).

Transmembrane regions (helical) follow at residues 35–55 (LMPVLIIVVAAVLGILVEAFV), 65–85 (LFLTVVAVAGSFAAIVGLAAG), 105–125 (PTLFLQGTILLVAMVALFTFA), 161–181 (GFTTTEVFPLLLFSVAGLLVF), 187–207 (LLTLFIALEVFSLPLYLLCAV), 222–242 (YFLLGAFSSAFLLFGIALLYG), 275–295 (ALLLIGGAMILTGLLFKVGAV), 322–342 (VAAFGALLRLLYVALPGLAWD), 345–365 (PVMWAVAIVTMLGGAIVAITQ), 371–391 (LLAYSSIAHAGFILAGVIAAS), 398–418 (VLFYLLAYSFVTVGAFAVVTL), 442–462 (VAAVFAVFLLAFAGIPLTSGF), 476–496 (GAGALVVVGVLSSAVAAFFYI), and 525–545 (IAVGVAVTLVLGLAPQYFLDL).

It belongs to the complex I subunit 2 family. As to quaternary structure, NDH-1 is composed of 14 different subunits. Subunits NuoA, H, J, K, L, M, N constitute the membrane sector of the complex.

It localises to the cell membrane. The catalysed reaction is a quinone + NADH + 5 H(+)(in) = a quinol + NAD(+) + 4 H(+)(out). In terms of biological role, NDH-1 shuttles electrons from NADH, via FMN and iron-sulfur (Fe-S) centers, to quinones in the respiratory chain. The immediate electron acceptor for the enzyme in this species is believed to be a menaquinone. Couples the redox reaction to proton translocation (for every two electrons transferred, four hydrogen ions are translocated across the cytoplasmic membrane), and thus conserves the redox energy in a proton gradient. This is NADH-quinone oxidoreductase subunit N 3 from Streptomyces griseus subsp. griseus (strain JCM 4626 / CBS 651.72 / NBRC 13350 / KCC S-0626 / ISP 5235).